Here is a 290-residue protein sequence, read N- to C-terminus: Large ribosomal subunit protein uL3 (290 aa).

The residue at position 152 (Gln152) is an N5-methylglutamine. The segment at 250–290 is disordered; the sequence is ARLAEEQAAAEAESLAQAEAEIAAEGSDAAPEGDADKKDGE. The segment covering 255-274 has biased composition (low complexity); that stretch reads EQAAAEAESLAQAEAEIAAE.

It belongs to the universal ribosomal protein uL3 family. Part of the 50S ribosomal subunit. Forms a cluster with proteins L14 and L19. In terms of processing, methylated by PrmB.

Functionally, one of the primary rRNA binding proteins, it binds directly near the 3'-end of the 23S rRNA, where it nucleates assembly of the 50S subunit. This is Large ribosomal subunit protein uL3 from Jannaschia sp. (strain CCS1).